The primary structure comprises 266 residues: tRNA pseudouridine synthase A (266 aa).

The active-site Nucleophile is the D57. Residue Y115 coordinates substrate.

This sequence belongs to the tRNA pseudouridine synthase TruA family. Homodimer.

It carries out the reaction uridine(38/39/40) in tRNA = pseudouridine(38/39/40) in tRNA. Formation of pseudouridine at positions 38, 39 and 40 in the anticodon stem and loop of transfer RNAs. This chain is tRNA pseudouridine synthase A, found in Buchnera aphidicola subsp. Acyrthosiphon pisum (strain Tuc7).